A 229-amino-acid polypeptide reads, in one-letter code: Large ribosomal subunit protein uL1 (229 aa).

The protein belongs to the universal ribosomal protein uL1 family. In terms of assembly, part of the 50S ribosomal subunit.

Its function is as follows. Binds directly to 23S rRNA. The L1 stalk is quite mobile in the ribosome, and is involved in E site tRNA release. Functionally, protein L1 is also a translational repressor protein, it controls the translation of the L11 operon by binding to its mRNA. This Streptococcus pneumoniae serotype 2 (strain D39 / NCTC 7466) protein is Large ribosomal subunit protein uL1.